A 35-amino-acid polypeptide reads, in one-letter code: Photosystem II reaction center protein M (35 aa).

Residues 7–27 form a helical membrane-spanning segment; it reads GFIATILFVLVPTVFLLILYI.

It belongs to the PsbM family. In terms of assembly, PSII is composed of 1 copy each of membrane proteins PsbA, PsbB, PsbC, PsbD, PsbE, PsbF, PsbH, PsbI, PsbJ, PsbK, PsbL, PsbM, PsbT, PsbX, PsbY, PsbZ, Psb30/Ycf12, peripheral proteins PsbO, CyanoQ (PsbQ), PsbU, PsbV and a large number of cofactors. It forms dimeric complexes.

It localises to the cellular thylakoid membrane. Its function is as follows. One of the components of the core complex of photosystem II (PSII). PSII is a light-driven water:plastoquinone oxidoreductase that uses light energy to abstract electrons from H(2)O, generating O(2) and a proton gradient subsequently used for ATP formation. It consists of a core antenna complex that captures photons, and an electron transfer chain that converts photonic excitation into a charge separation. This subunit is found at the monomer-monomer interface. This is Photosystem II reaction center protein M from Gloeothece citriformis (strain PCC 7424) (Cyanothece sp. (strain PCC 7424)).